The following is a 258-amino-acid chain: Aspartate/glutamate leucyltransferase (258 aa).

It belongs to the R-transferase family. Bpt subfamily.

Its subcellular location is the cytoplasm. It carries out the reaction N-terminal L-glutamyl-[protein] + L-leucyl-tRNA(Leu) = N-terminal L-leucyl-L-glutamyl-[protein] + tRNA(Leu) + H(+). The catalysed reaction is N-terminal L-aspartyl-[protein] + L-leucyl-tRNA(Leu) = N-terminal L-leucyl-L-aspartyl-[protein] + tRNA(Leu) + H(+). Its function is as follows. Functions in the N-end rule pathway of protein degradation where it conjugates Leu from its aminoacyl-tRNA to the N-termini of proteins containing an N-terminal aspartate or glutamate. This is Aspartate/glutamate leucyltransferase from Bradyrhizobium sp. (strain ORS 278).